The following is a 781-amino-acid chain: Probable aminopeptidase 2 (781 aa).

Substrate contacts are provided by residues E105 and 237 to 241 (GAMEN). Residue H272 coordinates Zn(2+). E273 acts as the Proton acceptor in catalysis. Zn(2+)-binding residues include H276 and E295.

It belongs to the peptidase M1 family. It depends on Zn(2+) as a cofactor.

The protein localises to the cytoplasm. In Sulfurisphaera tokodaii (strain DSM 16993 / JCM 10545 / NBRC 100140 / 7) (Sulfolobus tokodaii), this protein is Probable aminopeptidase 2 (ape2).